A 237-amino-acid polypeptide reads, in one-letter code: V-type proton ATPase subunit E (237 aa).

This sequence belongs to the V-ATPase E subunit family. As to quaternary structure, V-ATPase is a heteromultimeric enzyme composed of a peripheral catalytic V1 complex (components A to H) attached to an integral membrane V0 proton pore complex (components: a, c, c', c'' and d).

Subunit of the peripheral V1 complex of vacuolar ATPase essential for assembly or catalytic function. V-ATPase is responsible for acidifying a variety of intracellular compartments in eukaryotic cells. This chain is V-type proton ATPase subunit E (VATE), found in Gossypium hirsutum (Upland cotton).